Consider the following 496-residue polypeptide: Transcription termination factor MTERF9, chloroplastic (496 aa).

A chloroplast-targeting transit peptide spans 1–44 (MAGFSLYCFKNPRILFTLPSESPLFVLGSDKCSPATRRPSRKTR). Disordered regions lie at residues 57–90 (IINPKKKSRYGQTLSPYDSDEDDDDDDDDDDDDW) and 102–155 (YEKK…SWRL). Residues 74–90 (DSDEDDDDDDDDDDDDW) show a composition bias toward acidic residues. Residues 105 to 123 (KKPKSHKQTIAKKSVKKGI) show a composition bias toward basic residues. The span at 146-155 (SEKKKESWRL) shows a compositional bias: basic and acidic residues.

It belongs to the mTERF family.

It is found in the plastid. Its subcellular location is the chloroplast. In terms of biological role, transcription termination factor required for processing and steady-state levels of plastid transcripts. May play a role in response to abiotic stresses. The protein is Transcription termination factor MTERF9, chloroplastic of Arabidopsis thaliana (Mouse-ear cress).